A 484-amino-acid polypeptide reads, in one-letter code: Endoglucanase 3 (484 aa).

An N-terminal signal peptide occupies residues 1–21 (MASPFFFVFLLSALSLENTYA). The Nucleophile role is filled by D77. The N-linked (GlcNAc...) asparagine glycan is linked to N370. Active-site residues include H402, D453, and E462.

This sequence belongs to the glycosyl hydrolase 9 (cellulase E) family. Specifically expressed in root cap cells.

The protein localises to the secreted. The catalysed reaction is Endohydrolysis of (1-&gt;4)-beta-D-glucosidic linkages in cellulose, lichenin and cereal beta-D-glucans.. May be involved in the sloughing (cell-cell separation) of the root cap cells from root tip. In Arabidopsis thaliana (Mouse-ear cress), this protein is Endoglucanase 3 (CEL5).